A 446-amino-acid chain; its full sequence is C4-dicarboxylate transport protein (446 aa).

The next 9 membrane-spanning stretches (helical) occupy residues 25 to 45, 58 to 78, 93 to 113, 159 to 179, 199 to 219, 236 to 256, 322 to 342, 370 to 390, and 400 to 420; these read VQVL…PAIG, LVKM…IASI, FAYF…VANV, ALTE…GLAL, VFFG…FGAM, LLIA…LGAV, IYMT…LSLG, AATL…ILGI, and LTNF…EKGL.

Belongs to the dicarboxylate/amino acid:cation symporter (DAACS) (TC 2.A.23) family.

The protein resides in the cell inner membrane. Responsible for the transport of dicarboxylates such as succinate, fumarate, and malate from the periplasm across the membrane. This chain is C4-dicarboxylate transport protein, found in Sphingopyxis alaskensis (strain DSM 13593 / LMG 18877 / RB2256) (Sphingomonas alaskensis).